The chain runs to 172 residues: MIIYKDCITEDEMFSDIYKIIETPDGMCLEVEGKVIQREEGAIDDALIGGNASAEFQEDDVGGSSLTSGVDIVMNHKLQETGFTKDSYKNYIKDYVKQLKAHLEKTNPERVNTFMKGAQETVKKILGNFKNYQFYTGERMNPDGMVGLLDYREDGITPFMIFFKDGLIIEKC.

The TCTP domain occupies 1–172; sequence MIIYKDCITE…FKDGLIIEKC (172 aa).

Belongs to the TCTP family.

It is found in the cytoplasm. In terms of biological role, involved in calcium binding and microtubule stabilization. The chain is Translationally-controlled tumor protein homolog (tpt1) from Xenopus laevis (African clawed frog).